Here is a 106-residue protein sequence, read N- to C-terminus: Small ribosomal subunit protein bS6 (106 aa).

Belongs to the bacterial ribosomal protein bS6 family.

In terms of biological role, binds together with bS18 to 16S ribosomal RNA. The polypeptide is Small ribosomal subunit protein bS6 (Cyanothece sp. (strain PCC 7425 / ATCC 29141)).